Here is a 760-residue protein sequence, read N- to C-terminus: Translocation protein SEC63 homolog (760 aa).

Residues 1–14 are Lumenal-facing; that stretch reads MAGQQFQYDDSGNT. Residues 15–35 form a helical membrane-spanning segment; sequence FFYFLTSFVGLIVIPATYYLW. Over 36-69 the chain is Cytoplasmic; that stretch reads PRDQNAEQIRLKNIRKVYGRCMWYRLRLLKPQPN. A helical membrane pass occupies residues 70 to 90; that stretch reads IIPTVKKIVLLAGWALFLFLA. At 91–188 the chain is on the lumenal side; sequence YKVSKTDREY…LPAWIVDQKN (98 aa). Residues 104 to 165 form the J domain; that stretch reads NPYEVLNLDP…ESRKNWEEFG (62 aa). Residues 189–209 traverse the membrane as a helical segment; it reads SILVLLVYGLAFMVILPVVVG. The 345-residue stretch at 197 to 541 folds into the SEC63 1 domain; the sequence is GLAFMVILPV…LKKKPTPVLL (345 aa). Topologically, residues 210–760 are cytoplasmic; it reads SWWYRSIRYS…EEEEEEEDDD (551 aa). The disordered stretch occupies residues 492 to 617; sequence AEEQPAEDGQ…DDEAEWQELQ (126 aa). Residues 518–536 are compositionally biased toward basic residues; the sequence is KGPKKTAKSKKKKPLKKKP. T537 carries the post-translational modification Phosphothreonine. Over residues 582-608 the composition is skewed to basic and acidic residues; that stretch reads NRDSQSEKDDGSDRDSDREQDEKQNKD. Residues 597-635 are a coiled coil; it reads SDREQDEKQNKDDEAEWQELQQSIQRKERALLETKSKIT. An SEC63 2 domain is found at 637-714; it reads PVYSLYFPEE…GLDQIKPLKL (78 aa). A disordered region spans residues 720–760; sequence KPVPENHPQWDTAIEGDEDQEDSEGFEDSFEEEEEEEEDDD. Acidic residues predominate over residues 733–760; that stretch reads IEGDEDQEDSEGFEDSFEEEEEEEEDDD. A phosphoserine mark is found at S742 and S748.

In terms of assembly, the ER translocon complex consists of channel-forming core components SEC61A1, SEC61B and SEC61G and different auxiliary components such as SEC62 and SEC63. As to expression, widely expressed, with high levels in the liver.

It localises to the endoplasmic reticulum membrane. Mediates cotranslational and post-translational transport of certain precursor polypeptides across endoplasmic reticulum (ER). Proposed to play an auxiliary role in recognition of precursors with short and apolar signal peptides. May cooperate with SEC62 and HSPA5/BiP to facilitate targeting of small presecretory proteins into the SEC61 channel-forming translocon complex, triggering channel opening for polypeptide translocation to the ER lumen. Required for efficient PKD1/Polycystin-1 biogenesis and trafficking to the plasma membrane of the primary cilia. The polypeptide is Translocation protein SEC63 homolog (Homo sapiens (Human)).